The sequence spans 299 residues: tRNA dimethylallyltransferase (299 aa).

Position 13-20 (13-20 (GPTASGKT)) interacts with ATP. 15–20 (TASGKT) lines the substrate pocket. Residues 38-41 (DSRQ) are interaction with substrate tRNA.

The protein belongs to the IPP transferase family. Monomer. Mg(2+) serves as cofactor.

It catalyses the reaction adenosine(37) in tRNA + dimethylallyl diphosphate = N(6)-dimethylallyladenosine(37) in tRNA + diphosphate. In terms of biological role, catalyzes the transfer of a dimethylallyl group onto the adenine at position 37 in tRNAs that read codons beginning with uridine, leading to the formation of N6-(dimethylallyl)adenosine (i(6)A). The protein is tRNA dimethylallyltransferase of Prochlorococcus marinus (strain MIT 9211).